We begin with the raw amino-acid sequence, 358 residues long: MKPFPRAEISSSALQNNLAVLRQQASSSQVMAVVKANGYGHGLLNVAKCLNNADGFGLARLEEALELRAGSVKARLLLLEGFFRSTDLPLLVEHDIDTVVHHESQIEMLEQATLSKPVTVWLKVDSGMHRLGVTPEQFSAVYARLTACKNVAKPIHLMTHFACADEPDNHYTQVQMQTFNQLTADLPGFRTLANSAGALYWPKSQGDWIRPGIAMYGVSPVTGDCGANHGLIPAMNLVSRLIAVREHKANQPVGYGCYWTAKQDTRLGVVAIGYGDGYPRNAPEGTPVWINGRRVPIVGRVSMDMLTVDLGHDATDQVGDDVLLWGQALPVEEVAEHIGTIAYELVTKLTPRVAVCLA.

The Proton acceptor; specific for D-alanine role is filled by Lys-35. Position 35 is an N6-(pyridoxal phosphate)lysine (Lys-35). Arg-130 is a substrate binding site. Tyr-255 (proton acceptor; specific for L-alanine) is an active-site residue. Met-303 lines the substrate pocket.

The protein belongs to the alanine racemase family. The cofactor is pyridoxal 5'-phosphate.

It catalyses the reaction L-alanine = D-alanine. It participates in amino-acid biosynthesis; D-alanine biosynthesis; D-alanine from L-alanine: step 1/1. Functionally, catalyzes the interconversion of L-alanine and D-alanine. May also act on other amino acids. In Shewanella oneidensis (strain ATCC 700550 / JCM 31522 / CIP 106686 / LMG 19005 / NCIMB 14063 / MR-1), this protein is Alanine racemase (alr).